We begin with the raw amino-acid sequence, 178 residues long: ATP synthase subunit delta (178 aa).

The protein belongs to the ATPase delta chain family. F-type ATPases have 2 components, F(1) - the catalytic core - and F(0) - the membrane proton channel. F(1) has five subunits: alpha(3), beta(3), gamma(1), delta(1), epsilon(1). F(0) has three main subunits: a(1), b(2) and c(10-14). The alpha and beta chains form an alternating ring which encloses part of the gamma chain. F(1) is attached to F(0) by a central stalk formed by the gamma and epsilon chains, while a peripheral stalk is formed by the delta and b chains.

The protein resides in the cell membrane. In terms of biological role, f(1)F(0) ATP synthase produces ATP from ADP in the presence of a proton or sodium gradient. F-type ATPases consist of two structural domains, F(1) containing the extramembraneous catalytic core and F(0) containing the membrane proton channel, linked together by a central stalk and a peripheral stalk. During catalysis, ATP synthesis in the catalytic domain of F(1) is coupled via a rotary mechanism of the central stalk subunits to proton translocation. This protein is part of the stalk that links CF(0) to CF(1). It either transmits conformational changes from CF(0) to CF(1) or is implicated in proton conduction. This chain is ATP synthase subunit delta, found in Desulfitobacterium hafniense (strain DSM 10664 / DCB-2).